The chain runs to 467 residues: ATP-dependent protease ATPase subunit HslU (467 aa).

ATP is bound by residues valine 22 and 64–69; that span reads GVGKTE. The tract at residues 149 to 192 is disordered; the sequence is QTNNPLESLFGGAIPNFGQNNEDEEEPPTEEIKTKRSEIKRQLE. Residues 178 to 192 show a composition bias toward basic and acidic residues; that stretch reads EEIKTKRSEIKRQLE. ATP contacts are provided by aspartate 280, glutamate 345, and arginine 417.

Belongs to the ClpX chaperone family. HslU subfamily. A double ring-shaped homohexamer of HslV is capped on each side by a ring-shaped HslU homohexamer. The assembly of the HslU/HslV complex is dependent on binding of ATP.

Its subcellular location is the cytoplasm. Functionally, ATPase subunit of a proteasome-like degradation complex; this subunit has chaperone activity. The binding of ATP and its subsequent hydrolysis by HslU are essential for unfolding of protein substrates subsequently hydrolyzed by HslV. HslU recognizes the N-terminal part of its protein substrates and unfolds these before they are guided to HslV for hydrolysis. The sequence is that of ATP-dependent protease ATPase subunit HslU from Staphylococcus aureus (strain MRSA252).